Reading from the N-terminus, the 180-residue chain is Bifunctional protein PyrR (180 aa).

Positions 101 to 113 (LIVVDDVLFTGRT) match the PRPP-binding motif.

This sequence belongs to the purine/pyrimidine phosphoribosyltransferase family. PyrR subfamily. As to quaternary structure, homodimer and homohexamer; in equilibrium.

The catalysed reaction is UMP + diphosphate = 5-phospho-alpha-D-ribose 1-diphosphate + uracil. Its function is as follows. Regulates transcriptional attenuation of the pyrimidine nucleotide (pyr) operon by binding in a uridine-dependent manner to specific sites on pyr mRNA. This disrupts an antiterminator hairpin in the RNA and favors formation of a downstream transcription terminator, leading to a reduced expression of downstream genes. Functionally, also displays a weak uracil phosphoribosyltransferase activity which is not physiologically significant. This is Bifunctional protein PyrR from Bacillus pumilus (strain SAFR-032).